The sequence spans 103 residues: Non-histone chromosomal protein 6 (103 aa).

2 disordered regions span residues 1–30 (MPKAAAKSKTTGKVEKRRAKKDPNAPKRGL) and 70–103 (KQRAPYEAKAAADKKRYEDEKQAYNAEADEEESS). The segment at residues 26–94 (PKRGLSAYMF…RYEDEKQAYN (69 aa)) is a DNA-binding region (HMG box). Residues 70-91 (KQRAPYEAKAAADKKRYEDEKQ) show a composition bias toward basic and acidic residues.

It belongs to the NHP6 family. In terms of assembly, weakly associates with the stable heterodimer of ctc-1/pob3 and ctc-2/spt16 to form the FACT complex.

It localises to the nucleus. Its subcellular location is the chromosome. Functionally, DNA-binding protein that induces severe bending of DNA. Required for DNA-binding by the FACT complex, a general chromatin factor that acts to reorganize nucleosomes. The FACT complex is involved in multiple processes that require DNA as a template such as mRNA elongation, DNA replication and DNA repair. Also augments the fidelity of transcription by RNA polymerase III independently of any role in the FACT complex. The sequence is that of Non-histone chromosomal protein 6 (nhp-1) from Neurospora crassa (strain ATCC 24698 / 74-OR23-1A / CBS 708.71 / DSM 1257 / FGSC 987).